Here is a 122-residue protein sequence, read N- to C-terminus: UPF0382 membrane protein SAUSA300_0565 (122 aa).

4 helical membrane-spanning segments follow: residues 3 to 23 (LFIILGALNAMMAVGTGAFGA), 46 to 66 (MYHGLALLIIGVISGTTSINV), 69 to 89 (AGWLIFAGIIFFSGSLYILVL), and 98 to 118 (ITPIGGVLFIIGWIMLIIATF).

This sequence belongs to the UPF0382 family.

It localises to the cell membrane. This Staphylococcus aureus (strain USA300) protein is UPF0382 membrane protein SAUSA300_0565.